The primary structure comprises 172 residues: Putative B3 domain-containing protein At1g05615 (172 aa).

The segment at residues 69–169 (VDEGKIIDFE…NLAMVPLTPT (101 aa)) is a DNA-binding region (TF-B3).

It localises to the nucleus. This Arabidopsis thaliana (Mouse-ear cress) protein is Putative B3 domain-containing protein At1g05615.